The chain runs to 2334 residues: Centriolin (2334 aa).

Residues 1-70 (MKKGSERRLS…ESTVPLEPQQ (70 aa)) are disordered. A compositionally biased stretch (low complexity) spans 21–38 (PGPSSLRSSMRSRSLSPL). 4 LRR repeats span residues 126–147 (KLEV…DKLL), 148–169 (RLRE…ENMC), 170–191 (NLQK…FAKK), and 194–215 (SLRV…SKLK). Residues 228–266 (NPVVALPHYLQFIIFHLRSLESLEGQPVTTQDRQEAFER) enclose the LRRCT domain. 2 coiled-coil regions span residues 265–343 (ERFS…VELT) and 437–800 (DLQL…LNHV). 2 disordered regions span residues 542-562 (DSLD…RGKE) and 751-771 (SLRD…ENNE). Ser-832 bears the Phosphoserine mark. The stretch at 858-1102 (EKEEAQVRER…ITRLRDVLNL (245 aa)) forms a coiled coil. 3 disordered regions span residues 1154–1198 (SKVS…PLPA), 1213–1245 (KSFS…VPPP), and 1338–1360 (LKSK…EEVD). Over residues 1227–1238 (SQEESGLDDQEE) the composition is skewed to acidic residues. The stretch at 1320–2169 (EHHNLENEVS…MRTLKSEVKD (850 aa)) forms a coiled coil. Position 1478 is a phosphoserine (Ser-1478). The required for centrosome localization stretch occupies residues 1951-2121 (MMFQKLQKER…ELVAQDNHER (171 aa)). Residues 1988-2334 (QKSRLKQLLT…PLEEPNSYRH (347 aa)) are sufficient for interaction with HOOK2. Residues 2291 to 2307 (TSTSTDSASSPSLPSLV) show a composition bias toward low complexity. The disordered stretch occupies residues 2291 to 2334 (TSTSTDSASSPSLPSLVEDSQHGHSQSSFQVLQVPLEEPNSYRH).

As to quaternary structure, interacts with HOOK2. Interacts with EXOC6 and SNAPIN. Associates with the exocyst complex. In terms of tissue distribution, highly expressed in liver.

The protein resides in the cytoplasm. It is found in the cytoskeleton. Its subcellular location is the microtubule organizing center. The protein localises to the centrosome. It localises to the midbody. The protein resides in the midbody ring. Its function is as follows. Involved in cell cycle progression and cytokinesis. During the late steps of cytokinesis, anchors exocyst and SNARE complexes at the midbody, thereby allowing secretory vesicle-mediated abscission. The polypeptide is Centriolin (Cntrl) (Mus musculus (Mouse)).